Here is a 210-residue protein sequence, read N- to C-terminus: PITH domain-containing protein 1 (210 aa).

Residues 19–191 (HEPAERGVEY…EVTICNYEAA (173 aa)) enclose the PITH domain.

The protein belongs to the PITHD1 family.

Its subcellular location is the cytoplasm. Functionally, may play a role in promoting megakaryocyte differentiation by up-regulating RUNX1 expression. This Danio rerio (Zebrafish) protein is PITH domain-containing protein 1 (pithd1).